The sequence spans 642 residues: Serine/threonine-protein kinase pakA (642 aa).

Polar residues-rich tracts occupy residues methionine 1–phenylalanine 12 and leucine 38–asparagine 48. The segment at methionine 1 to asparagine 82 is disordered. Residues isoleucine 100 to glycine 113 enclose the CRIB domain. Disordered stretches follow at residues glycine 180–glutamate 276 and glutamine 317–glutamine 338. 2 stretches are compositionally biased toward low complexity: residues serine 217–serine 227 and valine 254–asparagine 266. In terms of domain architecture, Protein kinase spans tyrosine 361–methionine 612. Residues isoleucine 367–valine 375 and lysine 390 each bind ATP. Aspartate 480 acts as the Proton acceptor in catalysis.

Belongs to the protein kinase superfamily. STE Ser/Thr protein kinase family. STE20 subfamily.

It is found in the cytoplasm. Its subcellular location is the nucleus. It catalyses the reaction L-seryl-[protein] + ATP = O-phospho-L-seryl-[protein] + ADP + H(+). It carries out the reaction L-threonyl-[protein] + ATP = O-phospho-L-threonyl-[protein] + ADP + H(+). In terms of biological role, MAP4K component of the MAPK pathway required for the mating pheromone response and the regulation of cell polarity and cell cycle. This Talaromyces marneffei (Penicillium marneffei) protein is Serine/threonine-protein kinase pakA (pakA).